The primary structure comprises 510 residues: NAD(P)H-quinone oxidoreductase subunit 2, chloroplastic (510 aa).

A run of 12 helical transmembrane segments spans residues 24–44, 59–79, 99–119, 124–144, 149–169, 183–203, 229–249, 295–315, 323–343, 354–374, 395–415, and 418–438; these read LLLF…GLIL, WFYF…LFRW, IFQF…VEYI, MAIT…MFLC, LITI…LSGY, YLLM…WLYG, ISIA…PAPF, WHLL…LIAI, MLAY…IVGD, YMLF…LFGL, ALSS…AGFF, and LHLF…IGLL.

This sequence belongs to the complex I subunit 2 family. In terms of assembly, NDH is composed of at least 16 different subunits, 5 of which are encoded in the nucleus.

The protein resides in the plastid. It localises to the chloroplast thylakoid membrane. The enzyme catalyses a plastoquinone + NADH + (n+1) H(+)(in) = a plastoquinol + NAD(+) + n H(+)(out). It carries out the reaction a plastoquinone + NADPH + (n+1) H(+)(in) = a plastoquinol + NADP(+) + n H(+)(out). Its function is as follows. NDH shuttles electrons from NAD(P)H:plastoquinone, via FMN and iron-sulfur (Fe-S) centers, to quinones in the photosynthetic chain and possibly in a chloroplast respiratory chain. The immediate electron acceptor for the enzyme in this species is believed to be plastoquinone. Couples the redox reaction to proton translocation, and thus conserves the redox energy in a proton gradient. In Ensete ventricosum (Abyssinian banana), this protein is NAD(P)H-quinone oxidoreductase subunit 2, chloroplastic.